The primary structure comprises 383 residues: tRNA-specific 2-thiouridylase MnmA (383 aa).

Residues 9–16 (GMSGGVDS) and M35 contribute to the ATP site. Residues 95–97 (NPD) are interaction with target base in tRNA. The active-site Nucleophile is C100. C100 and C196 are disulfide-bonded. Residue G124 coordinates ATP. Positions 146–148 (KDQ) are interaction with tRNA. C196 serves as the catalytic Cysteine persulfide intermediate. An interaction with tRNA region spans residues 308 to 309 (RY).

It belongs to the MnmA/TRMU family.

It localises to the cytoplasm. It carries out the reaction S-sulfanyl-L-cysteinyl-[protein] + uridine(34) in tRNA + AH2 + ATP = 2-thiouridine(34) in tRNA + L-cysteinyl-[protein] + A + AMP + diphosphate + H(+). In terms of biological role, catalyzes the 2-thiolation of uridine at the wobble position (U34) of tRNA, leading to the formation of s(2)U34. The polypeptide is tRNA-specific 2-thiouridylase MnmA (Burkholderia lata (strain ATCC 17760 / DSM 23089 / LMG 22485 / NCIMB 9086 / R18194 / 383)).